We begin with the raw amino-acid sequence, 75 residues long: uncharacterized protein (75 aa).

A Glutaredoxin domain is found at 1-75 (MIKIYSTPTC…KAEIDKLIEK (75 aa)). C10 and C13 form a disulfide bridge.

This sequence belongs to the glutaredoxin family.

This is an uncharacterized protein from Clostridium pasteurianum.